The primary structure comprises 430 residues: Dye-decolorizing peroxidase Tfu_3078 (430 aa).

A signal peptide (tat-type signal) is located at residues 1-39 (MTEPDTERKGSSRRGFLAGLGAAALTGAGIGMAAGEVLR). A disordered region spans residues 42 to 75 (LPDSDPAASPEAEQRLRMAAQRADATAAPQPGIS). The span at 60–69 (AAQRADATAA) shows a compositional bias: low complexity. D242 (proton acceptor) is an active-site residue. Residue H338 coordinates heme.

Belongs to the DyP-type peroxidase family. In terms of assembly, monomer. Heme b serves as cofactor. Exported by the Tat system. The position of the signal peptide cleavage has not been experimentally proven.

It localises to the secreted. It carries out the reaction Reactive Blue 5 + 2 H2O2 = 2,2'-disulfonyl azobenzene + 3-[(4-amino-6-chloro-1,3,5-triazin-2-yl)amino]benzenesulfonate + phthalate + 2 H2O + 2 H(+). In terms of biological role, peroxidase that is able to convert a large number of compounds, but its physiological substrate is not known. Shows high reactivity towards anthraquinone dyes (e.g. Reactive Blue 19) and a modest activity towards standard peroxidase substrates (such as guaiacol and 2,6-dimethoxyphenol) and azo dyes (e.g. Reactive Blue 5). Is also able to oxidize aromatic sulfides enantioselectively, resulting in the corresponding (R)-sulfoxides, but with a poor efficiency. Does not display catalase activity. The chain is Dye-decolorizing peroxidase Tfu_3078 from Thermobifida fusca (strain YX).